The sequence spans 209 residues: Ribosomal RNA large subunit methyltransferase E (209 aa).

S-adenosyl-L-methionine is bound by residues glycine 63, tryptophan 65, aspartate 83, aspartate 99, and aspartate 124. Lysine 164 acts as the Proton acceptor in catalysis.

Belongs to the class I-like SAM-binding methyltransferase superfamily. RNA methyltransferase RlmE family.

The protein resides in the cytoplasm. The catalysed reaction is uridine(2552) in 23S rRNA + S-adenosyl-L-methionine = 2'-O-methyluridine(2552) in 23S rRNA + S-adenosyl-L-homocysteine + H(+). In terms of biological role, specifically methylates the uridine in position 2552 of 23S rRNA at the 2'-O position of the ribose in the fully assembled 50S ribosomal subunit. The protein is Ribosomal RNA large subunit methyltransferase E of Aeromonas hydrophila subsp. hydrophila (strain ATCC 7966 / DSM 30187 / BCRC 13018 / CCUG 14551 / JCM 1027 / KCTC 2358 / NCIMB 9240 / NCTC 8049).